The sequence spans 501 residues: Cell division control protein 24 (501 aa).

In terms of assembly, interacts with dna2, pcn1 and rfc1.

Its subcellular location is the nucleus. It localises to the cytoplasm. Functionally, has a role in the progression of DNA replication and in the maintenance of genomic integrity. Acts during S phase, after initiation, where it is essential for completion. In Schizosaccharomyces pombe (strain 972 / ATCC 24843) (Fission yeast), this protein is Cell division control protein 24 (cdc24).